Consider the following 291-residue polypeptide: Gamma-sarcoglycan (291 aa).

Residues 38 to 58 (LFVLLLLIVLLVNFALTIWIL) traverse the membrane as a helical; Signal-anchor for type II membrane protein segment. Over 59–291 (RVMWFSPVGM…TCHEHSHLCL (233 aa)) the chain is Extracellular. An N-linked (GlcNAc...) asparagine glycan is attached at N110. Intrachain disulfides connect C265-C290 and C267-C283.

It belongs to the sarcoglycan beta/delta/gamma/zeta family. In terms of assembly, interacts with the syntrophin SNTA1. Cross-link to form 2 major subcomplexes: one consisting of SGCB, SGCD and SGCG and the other consisting of SGCB and SGCD. The association between SGCB and SGCG is particularly strong while SGCA is loosely associated with the other sarcoglycans. Interacts with FLNC. In terms of processing, disulfide bonds are present.

Its subcellular location is the cell membrane. It is found in the sarcolemma. It localises to the cytoplasm. The protein localises to the cytoskeleton. Functionally, component of the sarcoglycan complex, a subcomplex of the dystrophin-glycoprotein complex which forms a link between the F-actin cytoskeleton and the extracellular matrix. The chain is Gamma-sarcoglycan (SGCG) from Bos taurus (Bovine).